Consider the following 330-residue polypeptide: DNA-directed RNA polymerase subunit alpha (330 aa).

An alpha N-terminal domain (alpha-NTD) region spans residues 1-237 (MYTEINEMLT…RQLHAFVDMK (237 aa)). The segment at 251-330 (FDPVLLRSVD…ENWPPASLGE (80 aa)) is alpha C-terminal domain (alpha-CTD).

It belongs to the RNA polymerase alpha chain family. Homodimer. The RNAP catalytic core consists of 2 alpha, 1 beta, 1 beta' and 1 omega subunit. When a sigma factor is associated with the core the holoenzyme is formed, which can initiate transcription.

It catalyses the reaction RNA(n) + a ribonucleoside 5'-triphosphate = RNA(n+1) + diphosphate. In terms of biological role, DNA-dependent RNA polymerase catalyzes the transcription of DNA into RNA using the four ribonucleoside triphosphates as substrates. This is DNA-directed RNA polymerase subunit alpha from Legionella pneumophila (strain Corby).